The following is a 689-amino-acid chain: uncharacterized protein (689 aa).

S566 lines the substrate pocket. Y579 (proton acceptor) is an active-site residue.

This sequence belongs to the short-chain dehydrogenases/reductases (SDR) family.

This is an uncharacterized protein from Bacillus subtilis (strain 168).